Reading from the N-terminus, the 183-residue chain is Holliday junction branch migration complex subunit RuvA (183 aa).

The tract at residues 1–63 (MTVGLIGVVE…EDAHLLYGFL (63 aa)) is domain I. The domain II stretch occupies residues 64 to 141 (EESEKILFER…IQDETKPVHN (78 aa)). Residue asparagine 141 is a region of interest, flexible linker. Positions 141–183 (NEAFLALESLGFKSAEINPILKKLKPNLSVEEAIKEALQQLRS) are domain III.

The protein belongs to the RuvA family. In terms of assembly, homotetramer. Forms an RuvA(8)-RuvB(12)-Holliday junction (HJ) complex. HJ DNA is sandwiched between 2 RuvA tetramers; dsDNA enters through RuvA and exits via RuvB. An RuvB hexamer assembles on each DNA strand where it exits the tetramer. Each RuvB hexamer is contacted by two RuvA subunits (via domain III) on 2 adjacent RuvB subunits; this complex drives branch migration. In the full resolvosome a probable DNA-RuvA(4)-RuvB(12)-RuvC(2) complex forms which resolves the HJ.

The protein localises to the cytoplasm. Its function is as follows. The RuvA-RuvB-RuvC complex processes Holliday junction (HJ) DNA during genetic recombination and DNA repair, while the RuvA-RuvB complex plays an important role in the rescue of blocked DNA replication forks via replication fork reversal (RFR). RuvA specifically binds to HJ cruciform DNA, conferring on it an open structure. The RuvB hexamer acts as an ATP-dependent pump, pulling dsDNA into and through the RuvAB complex. HJ branch migration allows RuvC to scan DNA until it finds its consensus sequence, where it cleaves and resolves the cruciform DNA. The sequence is that of Holliday junction branch migration complex subunit RuvA from Helicobacter acinonychis (strain Sheeba).